We begin with the raw amino-acid sequence, 365 residues long: Probable dual-specificity RNA methyltransferase RlmN (365 aa).

Catalysis depends on E106, which acts as the Proton acceptor. The Radical SAM core domain maps to 112–352 (YPDRVTLCVS…VTVRDTRGRE (241 aa)). C119 and C357 form a disulfide bridge. C126, C130, and C133 together coordinate [4Fe-4S] cluster. Residues 181 to 182 (GE), S215, 238 to 240 (SLH), and N314 each bind S-adenosyl-L-methionine. C357 functions as the S-methylcysteine intermediate in the catalytic mechanism.

Belongs to the radical SAM superfamily. RlmN family. [4Fe-4S] cluster is required as a cofactor.

The protein localises to the cytoplasm. It carries out the reaction adenosine(2503) in 23S rRNA + 2 reduced [2Fe-2S]-[ferredoxin] + 2 S-adenosyl-L-methionine = 2-methyladenosine(2503) in 23S rRNA + 5'-deoxyadenosine + L-methionine + 2 oxidized [2Fe-2S]-[ferredoxin] + S-adenosyl-L-homocysteine. It catalyses the reaction adenosine(37) in tRNA + 2 reduced [2Fe-2S]-[ferredoxin] + 2 S-adenosyl-L-methionine = 2-methyladenosine(37) in tRNA + 5'-deoxyadenosine + L-methionine + 2 oxidized [2Fe-2S]-[ferredoxin] + S-adenosyl-L-homocysteine. In terms of biological role, specifically methylates position 2 of adenine 2503 in 23S rRNA and position 2 of adenine 37 in tRNAs. The protein is Probable dual-specificity RNA methyltransferase RlmN of Thermobifida fusca (strain YX).